We begin with the raw amino-acid sequence, 193 residues long: Protein THEM6 (193 aa).

A signal peptide spans 1–18 (MSWLVVLLILYVIWDVNY). Asparagine 149 carries an N-linked (GlcNAc...) asparagine glycan.

Belongs to the THEM6 family.

Its subcellular location is the secreted. The polypeptide is Protein THEM6 (Drosophila melanogaster (Fruit fly)).